Here is a 529-residue protein sequence, read N- to C-terminus: Ribonuclease Y (529 aa).

A helical transmembrane segment spans residues 4–24 (GLIYISLEVLVACLITALVMY). The KH domain maps to 216–297 (LTTRIALPCS…NRIEEVYHRV (82 aa)). The HD domain occupies 342–435 (ALQHSKEVAL…VCAADALSAG (94 aa)).

The protein belongs to the RNase Y family.

The protein localises to the cell membrane. Endoribonuclease that initiates mRNA decay. The polypeptide is Ribonuclease Y (Helicobacter pylori (strain ATCC 700392 / 26695) (Campylobacter pylori)).